The sequence spans 68 residues: Large ribosomal subunit protein uL29 (68 aa).

This sequence belongs to the universal ribosomal protein uL29 family.

This is Large ribosomal subunit protein uL29 from Chlorobaculum parvum (strain DSM 263 / NCIMB 8327) (Chlorobium vibrioforme subsp. thiosulfatophilum).